We begin with the raw amino-acid sequence, 149 residues long: Deoxyuridine 5'-triphosphate nucleotidohydrolase (149 aa).

Substrate is bound by residues 68–70 (RSG), asparagine 81, 85–87 (TVD), and lysine 95.

The protein belongs to the dUTPase family. Mg(2+) serves as cofactor.

The catalysed reaction is dUTP + H2O = dUMP + diphosphate + H(+). Its pathway is pyrimidine metabolism; dUMP biosynthesis; dUMP from dCTP (dUTP route): step 2/2. In terms of biological role, this enzyme is involved in nucleotide metabolism: it produces dUMP, the immediate precursor of thymidine nucleotides and it decreases the intracellular concentration of dUTP so that uracil cannot be incorporated into DNA. This is Deoxyuridine 5'-triphosphate nucleotidohydrolase from Wolinella succinogenes (strain ATCC 29543 / DSM 1740 / CCUG 13145 / JCM 31913 / LMG 7466 / NCTC 11488 / FDC 602W) (Vibrio succinogenes).